Reading from the N-terminus, the 393-residue chain is Probable WRKY transcription factor 25 (393 aa).

A DNA-binding region (WRKY 1) is located at residues 160–224 (MVSRNSNDGY…YKGGHNHPKP (65 aa)). Zn(2+) is bound by residues C191, C196, H219, and H221. Disordered regions lie at residues 217 to 242 (GGHNHPKPEFTKRPSQSSLPSSVNGR) and 277 to 303 (SEYGEIDEEEEQPEMKRMKREGEDEGM). Polar residues predominate over residues 229-240 (RPSQSSLPSSVN). A compositionally biased stretch (basic and acidic residues) spans 289 to 298 (PEMKRMKREG). Positions 322–387 (SDIDVLIDGF…YEGRHNHDIP (66 aa)) form a DNA-binding region, WRKY 2. Residues C353, C358, H382, and H384 each contribute to the Zn(2+) site.

Belongs to the WRKY group I family. In terms of assembly, interacts with MKS1. Interacts with SIB1. Interacts with VQ10 and CAMBP25/VQ15. Phosphorylated by MPK4. In terms of tissue distribution, highly expressed in roots and at lower levels in leaves, stems and seeds.

The protein localises to the nucleus. Transcription factor. Interacts specifically with the W box (5'-(T)TGAC[CT]-3'), a frequently occurring elicitor-responsive cis-acting element. Functions with WRKY33 as positive regulator of salt stress response and abscisic acid (ABA) signaling. Plays a partial role in heat stress tolerance. Functions with WRKY26 and WRKY33 as positive regulator of plant thermotolerance by partially participating in ethylene-response signal transduction pathway. This chain is Probable WRKY transcription factor 25 (WRKY25), found in Arabidopsis thaliana (Mouse-ear cress).